A 252-amino-acid chain; its full sequence is Triosephosphate isomerase (252 aa).

9–11 contacts substrate; sequence NWK. Catalysis depends on His95, which acts as the Electrophile. Glu167 functions as the Proton acceptor in the catalytic mechanism. Residues Gly173, Ser213, and 234–235 contribute to the substrate site; that span reads GG.

It belongs to the triosephosphate isomerase family. Homodimer.

It is found in the cytoplasm. It carries out the reaction D-glyceraldehyde 3-phosphate = dihydroxyacetone phosphate. The protein operates within carbohydrate biosynthesis; gluconeogenesis. Its pathway is carbohydrate degradation; glycolysis; D-glyceraldehyde 3-phosphate from glycerone phosphate: step 1/1. Functionally, involved in the gluconeogenesis. Catalyzes stereospecifically the conversion of dihydroxyacetone phosphate (DHAP) to D-glyceraldehyde-3-phosphate (G3P). The protein is Triosephosphate isomerase of Lactiplantibacillus plantarum (strain ATCC BAA-793 / NCIMB 8826 / WCFS1) (Lactobacillus plantarum).